The sequence spans 107 residues: UPF0060 membrane protein ZMO1566 (107 aa).

Helical transmembrane passes span 4–24, 29–49, 55–75, and 84–104; these read LLYIPAALAEITGCFSFWAWI, SPLWLLPGIASLLLFAWLLTF, AGKAYAVYGGIYIIMSLLWSW, and HWDLIGAAFCLVGAAIILWMP.

Belongs to the UPF0060 family.

It is found in the cell inner membrane. This chain is UPF0060 membrane protein ZMO1566, found in Zymomonas mobilis subsp. mobilis (strain ATCC 31821 / ZM4 / CP4).